Here is a 323-residue protein sequence, read N- to C-terminus: GTP 3',8-cyclase (323 aa).

Residues 5–228 (GFGRKVDYLR…TVLRDTSSPA (224 aa)) enclose the Radical SAM core domain. Arg14 lines the GTP pocket. Residues Cys21 and Cys25 each contribute to the [4Fe-4S] cluster site. Tyr27 contacts S-adenosyl-L-methionine. Cys28 contributes to the [4Fe-4S] cluster binding site. Arg64 is a binding site for GTP. Gly68 is an S-adenosyl-L-methionine binding site. Thr95 lines the GTP pocket. Residue Ser119 coordinates S-adenosyl-L-methionine. Lys155 contacts GTP. Position 189 (Met189) interacts with S-adenosyl-L-methionine. 2 residues coordinate [4Fe-4S] cluster: Cys250 and Cys253. GTP is bound at residue 255–257 (RIR). A [4Fe-4S] cluster-binding site is contributed by Cys267. Basic and acidic residues predominate over residues 302 to 313 (KNKWSQKDDNEV). The segment at 302-323 (KNKWSQKDDNEVSTRAFYQTGG) is disordered.

Belongs to the radical SAM superfamily. MoaA family. In terms of assembly, monomer and homodimer. Requires [4Fe-4S] cluster as cofactor.

The catalysed reaction is GTP + AH2 + S-adenosyl-L-methionine = (8S)-3',8-cyclo-7,8-dihydroguanosine 5'-triphosphate + 5'-deoxyadenosine + L-methionine + A + H(+). Its pathway is cofactor biosynthesis; molybdopterin biosynthesis. Catalyzes the cyclization of GTP to (8S)-3',8-cyclo-7,8-dihydroguanosine 5'-triphosphate. This Aliarcobacter butzleri (strain RM4018) (Arcobacter butzleri) protein is GTP 3',8-cyclase.